Consider the following 283-residue polypeptide: MTLTAPPRLLLVHAHPDDESLWTGGTIARYAADGVQVTVVTCTLGEEGEIIPPALRELAADAADQLGGYRVAELRAACAALGVTDHRFLGGHGRWRDSGMVGTAANAHPRAFVAGSAQEQADELLAIINAVKPQVVVTYDGFGGYGHPDHIRAHEITTAAVAASSVVERLFHTVTSREETEAGARELAELADLPFRLPEPGELPAVDDAVITTTIDVSEHLMAKLRALRAHTTQVTVWQDGAGGASYALSNGIAQPVLPNEHYVLASGPAEGAERDLFGGLGG.

3 residues coordinate Zn(2+): His-15, Asp-18, and His-150.

This sequence belongs to the MshB deacetylase family. Zn(2+) serves as cofactor.

It carries out the reaction 1D-myo-inositol 2-acetamido-2-deoxy-alpha-D-glucopyranoside + H2O = 1D-myo-inositol 2-amino-2-deoxy-alpha-D-glucopyranoside + acetate. In terms of biological role, catalyzes the deacetylation of 1D-myo-inositol 2-acetamido-2-deoxy-alpha-D-glucopyranoside (GlcNAc-Ins) in the mycothiol biosynthesis pathway. The chain is 1D-myo-inositol 2-acetamido-2-deoxy-alpha-D-glucopyranoside deacetylase from Actinosynnema mirum (strain ATCC 29888 / DSM 43827 / JCM 3225 / NBRC 14064 / NCIMB 13271 / NRRL B-12336 / IMRU 3971 / 101).